The primary structure comprises 890 residues: Serine/threonine-protein kinase D3 (890 aa).

Phosphoserine is present on residues S6, S27, S37, S41, and S44. A Phorbol-ester/DAG-type 1 zinc finger spans residues 154 to 204 (PHTLYVHSYKAPTFCDYCGEMLWGLVRQGLKCEGCGLNYHKRCAFKIPNNC). A phosphoserine mark is found at S213 and S216. A Phorbol-ester/DAG-type 2 zinc finger spans residues 271 to 321 (PHTFAVHSYTRPTICQYCKRLLKGLFRQGMQCKDCKFNCHKRCASKVPRDC). A disordered region spans residues 332–371 (SSLGTDTDIPMDIDNNDINSDSSRGLDDTEEPSPPEDKMF). Phosphoserine is present on residues S364, S391, and S395. Residues 416–532 (TMVKEGWMVH…WEKAIRQALM (117 aa)) form the PH domain. Phosphotyrosine is present on Y426. Position 442 is a phosphoserine (S442). Position 457 is a phosphotyrosine (Y457). T535 carries the phosphothreonine modification. Phosphoserine is present on S539. The 257-residue stretch at 576 to 832 (IFADEVLGSG…VDKSLSHPWL (257 aa)) folds into the Protein kinase domain. ATP contacts are provided by residues 582-590 (LGSGQFGIV) and K605. Residue D699 is the Proton acceptor of the active site. S731 carries the post-translational modification Phosphoserine; by PKC. A Phosphoserine; by autocatalysis modification is found at S735. Y742 carries the post-translational modification Phosphotyrosine.

This sequence belongs to the protein kinase superfamily. CAMK Ser/Thr protein kinase family. PKD subfamily. The cofactor is Mg(2+). As to expression, ubiquitous.

The protein resides in the cytoplasm. It localises to the membrane. The catalysed reaction is L-seryl-[protein] + ATP = O-phospho-L-seryl-[protein] + ADP + H(+). It carries out the reaction L-threonyl-[protein] + ATP = O-phospho-L-threonyl-[protein] + ADP + H(+). Its activity is regulated as follows. Activated by DAG and phorbol esters. Phorbol-ester/DAG-type domains 1 and 2 bind both DAG and phorbol ester with high affinity and mediate translocation to the cell membrane. Autophosphorylation of Ser-735 and phosphorylation of Ser-731 by PKC relieves auto-inhibition by the PH domain. In terms of biological role, converts transient diacylglycerol (DAG) signals into prolonged physiological effects, downstream of PKC. Involved in resistance to oxidative stress. This chain is Serine/threonine-protein kinase D3 (PRKD3), found in Homo sapiens (Human).